The sequence spans 152 residues: Ribonuclease H (152 aa).

Positions 6–147 constitute an RNase H type-1 domain; it reads KKNNVIAYTD…ADELANKAIA (142 aa). Mg(2+) is bound by residues D15, E53, D75, and D139.

This sequence belongs to the RNase H family. In terms of assembly, monomer. Requires Mg(2+) as cofactor.

The protein localises to the cytoplasm. The enzyme catalyses Endonucleolytic cleavage to 5'-phosphomonoester.. In terms of biological role, endonuclease that specifically degrades the RNA of RNA-DNA hybrids. This Francisella philomiragia subsp. philomiragia (strain ATCC 25017 / CCUG 19701 / FSC 153 / O#319-036) protein is Ribonuclease H.